The sequence spans 347 residues: UDP-N-acetylenolpyruvoylglucosamine reductase (347 aa).

Positions 16 to 187 constitute an FAD-binding PCMH-type domain; sequence AIEQCSHYLV…IAVGLKLPKT (172 aa). R163 is a catalytic residue. Residue S233 is the Proton donor of the active site. The active site involves E328.

The protein belongs to the MurB family. The cofactor is FAD.

The protein localises to the cytoplasm. It catalyses the reaction UDP-N-acetyl-alpha-D-muramate + NADP(+) = UDP-N-acetyl-3-O-(1-carboxyvinyl)-alpha-D-glucosamine + NADPH + H(+). Its pathway is cell wall biogenesis; peptidoglycan biosynthesis. Its function is as follows. Cell wall formation. The sequence is that of UDP-N-acetylenolpyruvoylglucosamine reductase from Vibrio vulnificus (strain CMCP6).